Reading from the N-terminus, the 401-residue chain is Imidazolonepropionase (401 aa).

The Fe(3+) site is built by histidine 70 and histidine 72. Zn(2+) is bound by residues histidine 70 and histidine 72. Residues arginine 79, tyrosine 142, and histidine 175 each coordinate 4-imidazolone-5-propanoate. Tyrosine 142 is an N-formimidoyl-L-glutamate binding site. Histidine 238 lines the Fe(3+) pocket. Residue histidine 238 participates in Zn(2+) binding. Residue glutamine 241 coordinates 4-imidazolone-5-propanoate. Aspartate 313 contacts Fe(3+). Residue aspartate 313 coordinates Zn(2+). The N-formimidoyl-L-glutamate site is built by asparagine 315 and glycine 317. Residue threonine 318 participates in 4-imidazolone-5-propanoate binding.

This sequence belongs to the metallo-dependent hydrolases superfamily. HutI family. Requires Zn(2+) as cofactor. Fe(3+) is required as a cofactor.

It is found in the cytoplasm. It carries out the reaction 4-imidazolone-5-propanoate + H2O = N-formimidoyl-L-glutamate. It functions in the pathway amino-acid degradation; L-histidine degradation into L-glutamate; N-formimidoyl-L-glutamate from L-histidine: step 3/3. Catalyzes the hydrolytic cleavage of the carbon-nitrogen bond in imidazolone-5-propanoate to yield N-formimidoyl-L-glutamate. It is the third step in the universal histidine degradation pathway. This is Imidazolonepropionase from Xanthomonas euvesicatoria pv. vesicatoria (strain 85-10) (Xanthomonas campestris pv. vesicatoria).